Consider the following 983-residue polypeptide: Poly [ADP-ribose] polymerase 1 (983 aa).

2 PARP-type zinc fingers span residues 8–91 (WRAE…ESGA) and 114–194 (YGIE…KKAL). Zn(2+)-binding residues include cysteine 20, cysteine 23, histidine 52, cysteine 55, cysteine 126, cysteine 129, histidine 156, and cysteine 159. Residues 197–246 (AKTETAEARQTNSRAGTKRKNDSVDNEKSKLAKSSFDMSTSGALQPCSKE) form a disordered region. Residues 215-226 (RKNDSVDNEKSK) show a composition bias toward basic and acidic residues. Positions 236–375 (TSGALQPCSK…SVKPKRILRP (140 aa)) constitute a PADR1 zinc-binding domain. Positions 301–345 (GPLALCPMCSGHLSFSGGLYRCHGYISEWSKCSHSTLDPDRIKGK) are zinc ribbon. Residues cysteine 306, cysteine 309, cysteine 322, and cysteine 332 each coordinate Zn(2+). The tract at residues 369-397 (PKRILRPVLSGETSQGQGSKDATDSSRSE) is disordered. Residues 379–388 (GETSQGQGSK) are compositionally biased toward polar residues. The region spanning 394–484 (SRSERLADLK…RKLPFDKYKI (91 aa)) is the BRCT domain. The region spanning 511–611 (HCHILEDGNS…TNFQKQPGKF (101 aa)) is the WGR domain. Residues 633-751 (SSNLAPSLIE…DIEIASRIVG (119 aa)) form the PARP alpha-helical domain. A PARP catalytic domain is found at 758–983 (ESLDDKYKKL…LLKVRFKHKR (226 aa)).

The protein belongs to the ARTD/PARP family.

The protein resides in the nucleus. The catalysed reaction is NAD(+) + (ADP-D-ribosyl)n-acceptor = nicotinamide + (ADP-D-ribosyl)n+1-acceptor + H(+).. The enzyme catalyses L-aspartyl-[protein] + NAD(+) = 4-O-(ADP-D-ribosyl)-L-aspartyl-[protein] + nicotinamide. It carries out the reaction L-glutamyl-[protein] + NAD(+) = 5-O-(ADP-D-ribosyl)-L-glutamyl-[protein] + nicotinamide. Involved in the base excision repair (BER) pathway, by catalyzing the poly(ADP-ribosyl)ation of a limited number of acceptor proteins involved in chromatin architecture and in DNA metabolism. This modification follows DNA damages and appears as an obligatory step in a detection/signaling pathway leading to the reparation of DNA strand breaks. This chain is Poly [ADP-ribose] polymerase 1 (PARP1), found in Arabidopsis thaliana (Mouse-ear cress).